The chain runs to 1012 residues: Isoleucine--tRNA ligase, mitochondrial (1012 aa).

The N-terminal 48 residues, 1-48 (MHWGLCPRGPGAAAVAAAGSFWGPARLPSRLGCLGMTRRLVVRSVAGA), are a transit peptide targeting the mitochondrion. At K56 the chain carries N6-succinyllysine. K74 is subject to N6-acetyllysine; alternate. K74 is subject to N6-succinyllysine; alternate. A 'HIGH' region motif is present at residues 116–126 (PYANGDPHVGH). The residue at position 194 (K194) is an N6-succinyllysine. N6-acetyllysine is present on K233. Residue K241 is modified to N6-acetyllysine; alternate. N6-succinyllysine; alternate is present on K241. K479 and K500 each carry N6-succinyllysine. The ATP site is built by K664 and K667. The 'KMSKS' region motif lies at 664–668 (KMSKS). K725 is modified (N6-acetyllysine). N6-acetyllysine; alternate occurs at positions 775 and 781. 2 positions are modified to N6-succinyllysine; alternate: K775 and K781.

This sequence belongs to the class-I aminoacyl-tRNA synthetase family.

The protein resides in the mitochondrion matrix. It carries out the reaction tRNA(Ile) + L-isoleucine + ATP = L-isoleucyl-tRNA(Ile) + AMP + diphosphate. Its function is as follows. Aminoacyl-tRNA synthetase that catalyzes the specific attachment of isoleucine to its cognate tRNA (tRNA(Ile)). This is Isoleucine--tRNA ligase, mitochondrial from Mus musculus (Mouse).